The following is a 654-amino-acid chain: Endoplasmic reticulum chaperone BiP (654 aa).

An N-terminal signal peptide occupies residues 1–18 (MKLSLVAAVLLLLCAARA). A required for interaction with ELAPOR1 region spans residues 1 to 80 (MKLSLVAAVL…EGERLIGDAA (80 aa)). 36 to 39 (GTTY) contacts ATP. The residue at position 86 (S86) is a Phosphoserine. K96 serves as a coordination point for ATP. N6-acetyllysine is present on K125. The tract at residues 125 to 280 (KPYIQVDIGG…KKKTGKDVRK (156 aa)) is nucleotide-binding (NBD). Residue Y160 is modified to 3'-nitrotyrosine. K213 carries the post-translational modification N6-acetyllysine. 227 to 229 (GGT) lines the ATP pocket. K271 carries the N6-acetyllysine modification. 293–300 (EKAKRALS) lines the ATP pocket. An N6-acetyllysine modification is found at K326. Residue K352 forms a Glycyl lysine isopeptide (Lys-Gly) (interchain with G-Cter in SUMO2) linkage. The residue at position 353 (K353) is an N6-acetyllysine; alternate. K353 participates in a covalent cross-link: Glycyl lysine isopeptide (Lys-Gly) (interchain with G-Cter in SUMO1); alternate. 364 to 367 (GSTR) lines the ATP pocket. An interdomain linker region spans residues 409-419 (QDTGDLVLLDV). The tract at residues 420 to 500 (CPLTLGIETV…PRGVPQIEVT (81 aa)) is substrate-binding (SBD). Residue K447 is modified to N6-succinyllysine. The residue at position 492 (R492) is an Omega-N-methylarginine. T518 is modified (O-AMP-threonine; alternate). T518 carries the post-translational modification Phosphothreonine; alternate. K585 carries the N6,N6,N6-trimethyllysine; by METTL21A; in vitro modification. K585 bears the N6,N6-dimethyllysine; alternate mark. K585 carries the N6-methyllysine; alternate modification. Position 591 is an N6-methyllysine (K591). The disordered stretch occupies residues 632–654 (SKLYGSAGPPPTGEEDTSERDEL). 2 positions are modified to phosphothreonine: T643 and T648. Positions 644-654 (GEEDTSERDEL) are enriched in acidic residues. S649 is modified (phosphoserine). The Prevents secretion from ER signature appears at 651–654 (RDEL).

This sequence belongs to the heat shock protein 70 family. Monomer and homooligomer; homooligomerization via the interdomain linker inactivates the chaperone activity and acts as a storage of HSPA5/BiP molecules. Interacts with DNAJC1 (via J domain). Component of an EIF2 complex at least composed of CELF1/CUGBP1, CALR, CALR3, EIF2S1, EIF2S2, HSP90B1 and HSPA5. Part of a large chaperone multiprotein complex comprising DNAJB11, HSP90B1, HSPA5, HYOU, PDIA2, PDIA4, PDIA6, PPIB, SDF2L1, UGGT1 and very small amounts of ERP29, but not, or at very low levels, CALR nor CANX. Interacts with TMEM132A and TRIM21. May form a complex with ERLEC1, OS9, SEL1L and SYVN1. Interacts with DNAJC10. Interacts with DNAJB9/ERdj4; leading to recruit HSPA5/BiP to ERN1/IRE1. Interacts with ERN1/IRE1 (via luminal domain); the interaction takes place following interaction with DNAJB9/ERdj4 and leads to inactivate ERN1/IRE1, the interaction also competitively inhibits ERN1 interaction with MANF. Interacts directly with MANF (via SAP domain); the interaction inhibits ATP binding to HSPA5/BiP and subsequent nucleotide exchange. Interacts with EIF2AK3/PERK (via luminal domain); interaction leads to inactivate EIF2AK3/PERK. Interacts with MX1. Interacts with METTL23. Interacts with CEMIP; the interaction induces calcium leakage from the endoplasmic reticulum and cell migration. Interacts with PCSK4 form; the interaction takes place in the endoplasmic reticulum. Interacts with CIPC. Interacts with CCDC88B (via C-terminus); the interaction opposes ERN1-mediated JNK activation, protecting against apoptosis. Interacts with INPP5K; necessary for INPP5K localization at the endoplasmic reticulum. Interacts with MANF; the interaction is direct. Interacts with LOXL2; leading to activate the ERN1/IRE1-XBP1 pathway of the unfolded protein response. Interacts with CLU under stressed condition; interaction increases CLU protein stability; facilitates its retrotranslocation and redistribution to the mitochondria; cooperatively suppress stress-induced apoptosis by stabilizing mitochondrial membrane integrity. Interacts with CCDC47. Interacts with CLN3. Interacts with ELAPOR1; may regulate the function of HSPA5 in apoptosis and cell proliferation. Interacts with CASP7. Interacts with ILDR2; the interaction stabilizes ILDR2 expression. Interacts with ADAM7. Post-translationally, in unstressed cells, AMPylation at Thr-518 by FICD inactivates the chaperome activity: AMPylated form is locked in a relatively inert state and only weakly stimulated by J domain-containing proteins. In response to endoplasmic reticulum stress, de-AMPylation by the same protein, FICD, restores the chaperone activity.

The protein resides in the endoplasmic reticulum lumen. The protein localises to the melanosome. It localises to the cytoplasm. Its subcellular location is the cell surface. It carries out the reaction ATP + H2O = ADP + phosphate + H(+). With respect to regulation, the chaperone activity is regulated by ATP-induced allosteric coupling of the nucleotide-binding (NBD) and substrate-binding (SBD) domains. In the ADP-bound and nucleotide-free (apo) states, the two domains have little interaction. In contrast, in the ATP-bound state the two domains are tightly coupled, which results in drastically accelerated kinetics in both binding and release of polypeptide substrates. J domain-containing co-chaperones (DNAJB9/ERdj4 or DNAJC10/ERdj5) stimulate the ATPase activity and are required for efficient substrate recognition by HSPA5/BiP. Homooligomerization inactivates participating HSPA5/BiP protomers and probably act as reservoirs to store HSPA5/BiP molecules when they are not needed by the cell. Its function is as follows. Endoplasmic reticulum chaperone that plays a key role in protein folding and quality control in the endoplasmic reticulum lumen. Involved in the correct folding of proteins and degradation of misfolded proteins via its interaction with DNAJC10/ERdj5, probably to facilitate the release of DNAJC10/ERdj5 from its substrate. Acts as a key repressor of the EIF2AK3/PERK and ERN1/IRE1-mediated unfolded protein response (UPR). In the unstressed endoplasmic reticulum, recruited by DNAJB9/ERdj4 to the luminal region of ERN1/IRE1, leading to disrupt the dimerization of ERN1/IRE1, thereby inactivating ERN1/IRE1. Also binds and inactivates EIF2AK3/PERK in unstressed cells. Accumulation of misfolded protein in the endoplasmic reticulum causes release of HSPA5/BiP from ERN1/IRE1 and EIF2AK3/PERK, allowing their homodimerization and subsequent activation. Plays an auxiliary role in post-translational transport of small presecretory proteins across endoplasmic reticulum (ER). May function as an allosteric modulator for SEC61 channel-forming translocon complex, likely cooperating with SEC62 to enable the productive insertion of these precursors into SEC61 channel. Appears to specifically regulate translocation of precursors having inhibitory residues in their mature region that weaken channel gating. May also play a role in apoptosis and cell proliferation. The chain is Endoplasmic reticulum chaperone BiP from Ictidomys tridecemlineatus (Thirteen-lined ground squirrel).